Here is a 446-residue protein sequence, read N- to C-terminus: ATP-dependent protease ATPase subunit HslU (446 aa).

Residues I18, 60-65, D259, E324, and R396 each bind ATP; that span reads GVGKTE.

This sequence belongs to the ClpX chaperone family. HslU subfamily. As to quaternary structure, a double ring-shaped homohexamer of HslV is capped on each side by a ring-shaped HslU homohexamer. The assembly of the HslU/HslV complex is dependent on binding of ATP.

Its subcellular location is the cytoplasm. In terms of biological role, ATPase subunit of a proteasome-like degradation complex; this subunit has chaperone activity. The binding of ATP and its subsequent hydrolysis by HslU are essential for unfolding of protein substrates subsequently hydrolyzed by HslV. HslU recognizes the N-terminal part of its protein substrates and unfolds these before they are guided to HslV for hydrolysis. The chain is ATP-dependent protease ATPase subunit HslU from Vibrio atlanticus (strain LGP32) (Vibrio splendidus (strain Mel32)).